Consider the following 271-residue polypeptide: Tryptophan synthase alpha chain (271 aa).

Residues E49 and D60 each act as proton acceptor in the active site.

Belongs to the TrpA family. As to quaternary structure, tetramer of two alpha and two beta chains.

The enzyme catalyses (1S,2R)-1-C-(indol-3-yl)glycerol 3-phosphate + L-serine = D-glyceraldehyde 3-phosphate + L-tryptophan + H2O. The protein operates within amino-acid biosynthesis; L-tryptophan biosynthesis; L-tryptophan from chorismate: step 5/5. Functionally, the alpha subunit is responsible for the aldol cleavage of indoleglycerol phosphate to indole and glyceraldehyde 3-phosphate. The chain is Tryptophan synthase alpha chain from Burkholderia cenocepacia (strain HI2424).